The chain runs to 111 residues: Probable 4-amino-4-deoxy-L-arabinose-phosphoundecaprenol flippase subunit ArnE (111 aa).

Transmembrane regions (helical) follow at residues isoleucine 36–leucine 56, valine 61–alanine 81, and proline 88–glycine 108. Positions leucine 40–serine 109 constitute an EamA domain.

This sequence belongs to the ArnE family. Heterodimer of ArnE and ArnF.

It localises to the cell inner membrane. It participates in bacterial outer membrane biogenesis; lipopolysaccharide biosynthesis. In terms of biological role, translocates 4-amino-4-deoxy-L-arabinose-phosphoundecaprenol (alpha-L-Ara4N-phosphoundecaprenol) from the cytoplasmic to the periplasmic side of the inner membrane. The sequence is that of Probable 4-amino-4-deoxy-L-arabinose-phosphoundecaprenol flippase subunit ArnE from Shigella flexneri.